Reading from the N-terminus, the 280-residue chain is PsbP domain-containing protein 7, chloroplastic (280 aa).

Residues 1-36 (MSLKPYFSLLYSSPTNVKLSNFLIAQQPSGDLKTTP) constitute a chloroplast transit peptide.

The protein belongs to the PsbP family.

The protein localises to the plastid. It is found in the chloroplast. The protein is PsbP domain-containing protein 7, chloroplastic (PPD7) of Arabidopsis thaliana (Mouse-ear cress).